The chain runs to 148 residues: Lipoprotein signal peptidase (148 aa).

2 helical membrane passes run 57–77 (QWIF…YLNT) and 80–100 (VHIF…GNLI). Catalysis depends on residues Asp110 and Asp126. Residues 124-144 (IADVFVVVGTVFLCIYVLFFE) traverse the membrane as a helical segment.

Belongs to the peptidase A8 family.

Its subcellular location is the cell membrane. The catalysed reaction is Release of signal peptides from bacterial membrane prolipoproteins. Hydrolyzes -Xaa-Yaa-Zaa-|-(S,diacylglyceryl)Cys-, in which Xaa is hydrophobic (preferably Leu), and Yaa (Ala or Ser) and Zaa (Gly or Ala) have small, neutral side chains.. It participates in protein modification; lipoprotein biosynthesis (signal peptide cleavage). Functionally, this protein specifically catalyzes the removal of signal peptides from prolipoproteins. This is Lipoprotein signal peptidase from Clostridioides difficile (strain 630) (Peptoclostridium difficile).